The primary structure comprises 227 residues: MSRFIQGDCVRVMATFPGNAVDFILTDPPYLVGFRDRQGRTIAGDKTDEWLQPACNEMYRVLKKDALMVSFYGWNRVDRFMAAWKNAGFSVVGHLVFTKTYTSKAAYVGYRHECAYILAKGRPALPQKPLPDVLGWKYSGNRHHPTEKPVTSLQPLIESFTHPNAIVLDPFAGSGSTCVAALQSGRRYIGIELLEQYHRAGQQRLAAVQRAMQQGAANDDWFMPEAA.

The protein belongs to the N(4)/N(6)-methyltransferase family.

Functionally, a putative beta subtype methylase whose recognition site is unknown. The sequence is that of Putative methylase YubD (yubD) from Escherichia coli (strain K12).